We begin with the raw amino-acid sequence, 214 residues long: Large ribosomal subunit protein uL29m (214 aa).

This sequence belongs to the universal ribosomal protein uL29 family. In terms of assembly, component of the mitochondrial large ribosomal subunit. Mature mitochondrial ribosomes consist of a small (37S) and a large (54S) subunit. The 37S subunit contains at least 33 different proteins and 1 molecule of RNA (15S). The 54S subunit contains at least 45 different proteins and 1 molecule of RNA (21S).

It is found in the mitochondrion. This chain is Large ribosomal subunit protein uL29m (mrpl4), found in Aspergillus terreus (strain NIH 2624 / FGSC A1156).